The following is a 330-amino-acid chain: MKIAVDAMGGDNAPKAVIEGVMKAVEDFEDLEITLIGDREKIAAHLTEHGRITVKHAEEVIEATDEPVRAVRRKKNSSMVLMAGEVAEGRADACISAGNTGALMTAGLFIVGRIEGIERPALAPTLPTVSGDGFLLLDVGANVDAKPEHLVQYAIMGSVYGEQVLGVKNPRIGLLNVGTEDKKGNELAKQTFQKLKETDLNFIGNVEARDMLDGVADVIVTDGFTGNVALKTVEGAALSIFKMLRTTLTSSFTAKLAASALKPKLKEMKTKMDYSEYGGAGLFGLKAPVIKAHGSSDGRAVYHAIRQAREMVSQNVAAFIEEKIQQKADE.

The protein belongs to the PlsX family. As to quaternary structure, homodimer. Probably interacts with PlsY.

It localises to the cytoplasm. The catalysed reaction is a fatty acyl-[ACP] + phosphate = an acyl phosphate + holo-[ACP]. It functions in the pathway lipid metabolism; phospholipid metabolism. Its function is as follows. Catalyzes the reversible formation of acyl-phosphate (acyl-PO(4)) from acyl-[acyl-carrier-protein] (acyl-ACP). This enzyme utilizes acyl-ACP as fatty acyl donor, but not acyl-CoA. The chain is Phosphate acyltransferase from Bacillus licheniformis (strain ATCC 14580 / DSM 13 / JCM 2505 / CCUG 7422 / NBRC 12200 / NCIMB 9375 / NCTC 10341 / NRRL NRS-1264 / Gibson 46).